The sequence spans 930 residues: MKLKDTLNLGKTEFPMRAGLPTKEPVWQKEWEYAKLYQRRQELNQGKPHFTLHDGPPYANGNIHVGHAMNKISKDIIVRSKSMSGFYAPFIPGWDTHGLPIEQVLSKQGVKRKEMDLVEYLKLCREYALSQVDKQREDFKRLGVSGDWENPYVTLTPDYEAAQIRVFGEMANKGYIYRGAKPVYWSWSSESALAEAEIEYHDLVSTSLYYANKVKDGKGVLDTDTYIVVWTTTPFTITASRGLTVGADIDYVLVQPAGEARKFVVAAELLTSLSEKFGWADVQVLETYRGQELNHIVTEHPWDTAVEELVILGDHVTTDSGTGIVHTAPGFGEDDYNVGIANNLEVAVTVDERGIMMKNAGPEFEGQFYEKVVPTVIEKLGNLLLAQEEISHSYPFDWRTKKPIIWRAVPQWFASVSKFRQEILDEIEKVKFHSEWGKVRLYNMIRDRGDWVISRQRAWGVPLPIFYAEDGTAIMVAETIEHVAQLFEEHGSSIWWERDAKDLLPEGFTHPGSPNGEFKKETDIMDVWFDSGSSWNGVVVNRPELTYPADLYLEGSDQYRGWFNSSLITSVANHGVAPYKQILSQGFALDGKGEKMSKSLGNTIAPSDVEKQFGAEILRLWVTSVDSSNDVRISMDILSQVSETYRKIRNTLRFLIANTSDFNPAQDTVAYDELRSVDKYMTIRFNQLVKTIRDAYADFEFLTIYKALVNFINVDLSAFYLDFAKDVVYIEGAKSLERRQMQTVFYDILVKITKLLTPILPHTAEEIWSYLEFETEDFVQLSELPEVQTFANQEEILDTWAAFMDFRGQAQKALEEARNAKVIGKSLEAHLTVYPNEVVKTLLEAVNSNVAQLLIVSELTIAEGPAPEAALSFEDVAFTVERATGEVCDRCRRIDPTTAERSYQAVICDHCASIVEENFAEAVAEGFEEK.

The short motif at 57–67 (PYANGNIHVGH) is the 'HIGH' region element. Residue Glu554 participates in L-isoleucyl-5'-AMP binding. A 'KMSKS' region motif is present at residues 595–599 (KMSKS). An ATP-binding site is contributed by Lys598. Residues Cys888, Cys891, Cys908, and Cys911 each coordinate Zn(2+).

It belongs to the class-I aminoacyl-tRNA synthetase family. IleS type 1 subfamily. In terms of assembly, monomer. Zn(2+) is required as a cofactor.

Its subcellular location is the cytoplasm. It carries out the reaction tRNA(Ile) + L-isoleucine + ATP = L-isoleucyl-tRNA(Ile) + AMP + diphosphate. Catalyzes the attachment of isoleucine to tRNA(Ile). As IleRS can inadvertently accommodate and process structurally similar amino acids such as valine, to avoid such errors it has two additional distinct tRNA(Ile)-dependent editing activities. One activity is designated as 'pretransfer' editing and involves the hydrolysis of activated Val-AMP. The other activity is designated 'posttransfer' editing and involves deacylation of mischarged Val-tRNA(Ile). The protein is Isoleucine--tRNA ligase of Streptococcus pneumoniae (strain ATCC BAA-255 / R6).